Reading from the N-terminus, the 805-residue chain is H(+)/Cl(-) exchange transporter 7 (805 aa).

The tract at residues Met-1 to Pro-49 is disordered. Residues Met-1 to Arg-126 lie on the Cytoplasmic side of the membrane. 2 positions are modified to phosphoserine: Ser-9 and Ser-60. The next 2 membrane-spanning stretches (helical) occupy residues Trp-127 to Ile-159 and Phe-174 to Ile-197. The Selectivity filter part_1 signature appears at Gly-203–Pro-207. Ser-204 serves as a coordination point for chloride. The helical intramembrane region spans Ile-206–Leu-213. A run of 2 helical transmembrane segments spans residues Arg-223 to Gly-241 and Glu-247 to Gly-264. The short motif at Gly-245–Pro-249 is the Selectivity filter part_2 element. 2 intramembrane regions (helical) span residues Phe-288 to Ala-300 and Pro-304 to Leu-312. Helical transmembrane passes span Phe-322–Val-341, Ile-375–Arg-405, Pro-410–Ile-432, Pro-487–Leu-507, and Gly-512–Leu-535. Positions Gly-512–Pro-516 match the Selectivity filter part_3 motif. A chloride-binding site is contributed by Phe-514. Residues Gly-545–Ile-559 constitute an intramembrane region (helical). Positions Val-560–Met-562 form an intramembrane region, note=Loop between two helices. The segment at residues Thr-563–Thr-574 is an intramembrane region (helical). Residues Ser-575–Thr-578 constitute an intramembrane region (note=Loop between two helices). A helical transmembrane segment spans residues Tyr-579–Phe-597. Over Ile-598 to Thr-805 the chain is Cytoplasmic. Tyr-602 contacts chloride. 2 consecutive CBS domains span residues Met-631–Glu-695 and Met-741–Glu-799. ATP contacts are provided by residues His-658 to Gly-660 and Thr-783 to Asp-786. At Ser-801 the chain carries Phosphoserine.

The protein belongs to the chloride channel (TC 2.A.49) family. ClC-7/CLCN7 subfamily. In terms of assembly, chloride channel 7 are heteromers of alpha (CLCN7) and beta (OSTM1) subunits. In terms of tissue distribution, brain and kidney.

The protein localises to the lysosome membrane. It catalyses the reaction 2 chloride(in) + H(+)(out) = 2 chloride(out) + H(+)(in). Its function is as follows. Slowly voltage-gated channel mediating the exchange of chloride ions against protons. Functions as antiporter and contributes to the acidification of the lysosome lumen and may be involved in maintaining lysosomal pH. The CLC channel family contains both chloride channels and proton-coupled anion transporters that exchange chloride or another anion for protons. The presence of conserved gating glutamate residues is typical for family members that function as antiporters. This is H(+)/Cl(-) exchange transporter 7 from Homo sapiens (Human).